The sequence spans 816 residues: Probable disease resistance protein At4g33300 (816 aa).

An RPW8 domain is found at 1 to 149; that stretch reads MAITDFFAGE…SLDRVIQQVG (149 aa). Residues 95–111 are a coiled coil; the sequence is TLARKMEKLEKTISNFL. One can recognise an NB-ARC domain in the interval 191–443; the sequence is VKKMMFESQG…LDVLINIWIE (253 aa). 207–214 serves as a coordination point for ATP; the sequence is GMGGVGKT. Residues 399–415 are a coiled coil; the sequence is SRLLRQMEASLDNLDQT. 4 LRR repeats span residues 681–704, 705–727, 729–751, and 753–774; these read SLSC…SKLQ, ALEI…ICEL, GLKY…IGKL, and KLEK…AVSL.

This sequence belongs to the disease resistance NB-LRR family.

Probable disease resistance protein. The protein is Probable disease resistance protein At4g33300 of Arabidopsis thaliana (Mouse-ear cress).